Consider the following 428-residue polypeptide: Glutamate-1-semialdehyde 2,1-aminomutase 1 (428 aa).

Position 267 is an N6-(pyridoxal phosphate)lysine (K267).

It belongs to the class-III pyridoxal-phosphate-dependent aminotransferase family. HemL subfamily. Homodimer. Pyridoxal 5'-phosphate serves as cofactor.

The protein localises to the cytoplasm. It carries out the reaction (S)-4-amino-5-oxopentanoate = 5-aminolevulinate. It functions in the pathway porphyrin-containing compound metabolism; protoporphyrin-IX biosynthesis; 5-aminolevulinate from L-glutamyl-tRNA(Glu): step 2/2. The protein is Glutamate-1-semialdehyde 2,1-aminomutase 1 of Staphylococcus aureus (strain bovine RF122 / ET3-1).